A 534-amino-acid polypeptide reads, in one-letter code: Apolipoprotein N-acyltransferase (534 aa).

A run of 7 helical transmembrane segments spans residues 18–38 (LLAIAAGAFAVLALPPFGFFA), 39–59 (AMFLSFTLLVWLIDGAAASPD), 74–94 (WLFGFGYFVAGLWWLGHALLV), 105–125 (LAILGLPACLAIFYGLAVALA), 127–147 (IFWSDGMGRIAALAAGFGLME), 178–198 (VIGAMGVTALAVFVFSAPALA), and 209–229 (ALAVLLFAAHLGYGAYALYVA). A CN hydrolase domain is found at 246–496 (VQPDIDQAAK…TGFIDATVDR (251 aa)). Glu-291 functions as the Proton acceptor in the catalytic mechanism. Residue Lys-355 is part of the active site. The Nucleophile role is filled by Cys-408. The helical transmembrane segment at 504 to 524 (TFPRQTYFWLTEALLILIALV) threads the bilayer.

This sequence belongs to the CN hydrolase family. Apolipoprotein N-acyltransferase subfamily.

It localises to the cell inner membrane. The catalysed reaction is N-terminal S-1,2-diacyl-sn-glyceryl-L-cysteinyl-[lipoprotein] + a glycerophospholipid = N-acyl-S-1,2-diacyl-sn-glyceryl-L-cysteinyl-[lipoprotein] + a 2-acyl-sn-glycero-3-phospholipid + H(+). It functions in the pathway protein modification; lipoprotein biosynthesis (N-acyl transfer). Functionally, catalyzes the phospholipid dependent N-acylation of the N-terminal cysteine of apolipoprotein, the last step in lipoprotein maturation. The sequence is that of Apolipoprotein N-acyltransferase from Rhizobium leguminosarum bv. trifolii (strain WSM2304).